Consider the following 561-residue polypeptide: Putative transport protein YbjL (561 aa).

The next 5 helical transmembrane spans lie at 8–28 (LLNG…LCLG), 32–52 (LGSV…LLGQ), 66–86 (FMLF…SIFF), 94–114 (MLAL…GKLF), and 158–178 (NLSL…IVGA). RCK C-terminal domains are found at residues 200–288 (RGLD…SFRN) and 292–373 (VFDR…RIGF). The next 5 membrane-spanning stretches (helical) occupy residues 383-403 (LLAF…TFQF), 406-426 (FSFG…LGFL), 447-467 (FGLM…ISNG), 475-495 (MLIA…LFGA), and 540-560 (AIAN…WPGL).

Belongs to the AAE transporter (TC 2.A.81) family. YbjL subfamily.

It localises to the cell membrane. This is Putative transport protein YbjL from Salmonella agona (strain SL483).